Reading from the N-terminus, the 315-residue chain is Aspartate carbamoyltransferase catalytic subunit (315 aa).

Carbamoyl phosphate contacts are provided by R55 and T56. L-aspartate is bound at residue K83. Carbamoyl phosphate contacts are provided by R105, H138, and Q141. Residues R171 and R225 each coordinate L-aspartate. Carbamoyl phosphate-binding residues include G266 and P267.

This sequence belongs to the aspartate/ornithine carbamoyltransferase superfamily. ATCase family. Heterododecamer (2C3:3R2) of six catalytic PyrB chains organized as two trimers (C3), and six regulatory PyrI chains organized as three dimers (R2).

The catalysed reaction is carbamoyl phosphate + L-aspartate = N-carbamoyl-L-aspartate + phosphate + H(+). The protein operates within pyrimidine metabolism; UMP biosynthesis via de novo pathway; (S)-dihydroorotate from bicarbonate: step 2/3. Functionally, catalyzes the condensation of carbamoyl phosphate and aspartate to form carbamoyl aspartate and inorganic phosphate, the committed step in the de novo pyrimidine nucleotide biosynthesis pathway. This chain is Aspartate carbamoyltransferase catalytic subunit, found in Mycolicibacterium vanbaalenii (strain DSM 7251 / JCM 13017 / BCRC 16820 / KCTC 9966 / NRRL B-24157 / PYR-1) (Mycobacterium vanbaalenii).